Here is a 216-residue protein sequence, read N- to C-terminus: RNA pyrophosphohydrolase (216 aa).

Positions 6 to 149 (GFRPNVGIIL…KRDVYQLALT (144 aa)) constitute a Nudix hydrolase domain. Residues 38-59 (GGIKYGETPMQAMYRELHEETG) carry the Nudix box motif. Residues 159 to 191 (AQRTDKSRGPRAPRYPRVANGHAASETPAAIDT) are disordered.

This sequence belongs to the Nudix hydrolase family. RppH subfamily. A divalent metal cation serves as cofactor.

Accelerates the degradation of transcripts by removing pyrophosphate from the 5'-end of triphosphorylated RNA, leading to a more labile monophosphorylated state that can stimulate subsequent ribonuclease cleavage. In Burkholderia pseudomallei (strain 668), this protein is RNA pyrophosphohydrolase.